A 539-amino-acid chain; its full sequence is Glucans biosynthesis protein D (539 aa).

Residues 1-29 (MNRRNLLKASMALAAYGSVSASGLFAARA) constitute a signal peptide (tat-type signal).

This sequence belongs to the OpgD/OpgG family. In terms of processing, predicted to be exported by the Tat system. The position of the signal peptide cleavage has not been experimentally proven.

It localises to the periplasm. Its pathway is glycan metabolism; osmoregulated periplasmic glucan (OPG) biosynthesis. Probably involved in the control of the structural glucose backbone of osmoregulated periplasmic glucans (OPGs). The sequence is that of Glucans biosynthesis protein D from Pseudomonas syringae pv. syringae (strain B728a).